A 123-amino-acid polypeptide reads, in one-letter code: uncharacterized protein (123 aa).

A helical transmembrane segment spans residues 14–34 (VVLKITAVVCSVFSIRVLILA).

The protein resides in the membrane. This is an uncharacterized protein from Saccharomyces cerevisiae (strain ATCC 204508 / S288c) (Baker's yeast).